The sequence spans 214 residues: Cytochrome b (214 aa).

4 consecutive transmembrane segments (helical) span residues 31–51, 75–96, 111–131, and 176–196; these read FGSM…FLAI, WIMQ…YIHI, WLSG…GYVL, and FFAL…IHIL. Residues His-81 and His-95 each contribute to the heme b site. The heme b site is built by His-180 and His-194. An a ubiquinone-binding site is contributed by His-199.

The protein belongs to the cytochrome b family. In terms of assembly, the cytochrome bc1 complex contains 3 respiratory subunits (MT-CYB, CYC1 and UQCRFS1), 2 core proteins (UQCRC1 and UQCRC2) and probably 6 low-molecular weight proteins. The cofactor is heme b.

The protein resides in the mitochondrion inner membrane. In terms of biological role, component of the ubiquinol-cytochrome c reductase complex (complex III or cytochrome b-c1 complex) that is part of the mitochondrial respiratory chain. The b-c1 complex mediates electron transfer from ubiquinol to cytochrome c. Contributes to the generation of a proton gradient across the mitochondrial membrane that is then used for ATP synthesis. The protein is Cytochrome b (MT-CYB) of Agkistrodon contortrix contortrix (Southern copperhead).